The chain runs to 186 residues: Cell division protein SepF (186 aa).

Residues 24–91 (EDEEEEERYA…HNPPHLRAVP (68 aa)) form a disordered region.

The protein belongs to the SepF family. As to quaternary structure, homodimer. Interacts with FtsZ.

Its subcellular location is the cytoplasm. Cell division protein that is part of the divisome complex and is recruited early to the Z-ring. Probably stimulates Z-ring formation, perhaps through the cross-linking of FtsZ protofilaments. Its function overlaps with FtsA. This is Cell division protein SepF from Rubrobacter xylanophilus (strain DSM 9941 / JCM 11954 / NBRC 16129 / PRD-1).